Reading from the N-terminus, the 121-residue chain is Small ribosomal subunit protein uS13 (121 aa).

A disordered region spans residues 93-121 (RGLPMRGQRTRTNARTRKGPRKAAQSLKK).

The protein belongs to the universal ribosomal protein uS13 family. In terms of assembly, part of the 30S ribosomal subunit. Forms a loose heterodimer with protein S19. Forms two bridges to the 50S subunit in the 70S ribosome.

In terms of biological role, located at the top of the head of the 30S subunit, it contacts several helices of the 16S rRNA. In the 70S ribosome it contacts the 23S rRNA (bridge B1a) and protein L5 of the 50S subunit (bridge B1b), connecting the 2 subunits; these bridges are implicated in subunit movement. Contacts the tRNAs in the A and P-sites. The protein is Small ribosomal subunit protein uS13 of Albidiferax ferrireducens (strain ATCC BAA-621 / DSM 15236 / T118) (Rhodoferax ferrireducens).